The sequence spans 156 residues: Small ribosomal subunit protein uS7 (156 aa).

The protein belongs to the universal ribosomal protein uS7 family. As to quaternary structure, part of the 30S ribosomal subunit. Contacts proteins S9 and S11.

One of the primary rRNA binding proteins, it binds directly to 16S rRNA where it nucleates assembly of the head domain of the 30S subunit. Is located at the subunit interface close to the decoding center, probably blocks exit of the E-site tRNA. The chain is Small ribosomal subunit protein uS7 from Syntrophobacter fumaroxidans (strain DSM 10017 / MPOB).